The chain runs to 105 residues: Small ribosomal subunit protein uS10 (105 aa).

It belongs to the universal ribosomal protein uS10 family. In terms of assembly, part of the 30S ribosomal subunit.

In terms of biological role, involved in the binding of tRNA to the ribosomes. This is Small ribosomal subunit protein uS10 from Desulfovibrio desulfuricans (strain ATCC 27774 / DSM 6949 / MB).